A 502-amino-acid polypeptide reads, in one-letter code: Maturase K (502 aa).

The protein belongs to the intron maturase 2 family. MatK subfamily.

Its subcellular location is the plastid. The protein localises to the chloroplast. Usually encoded in the trnK tRNA gene intron. Probably assists in splicing its own and other chloroplast group II introns. In Ehretia anacua (Sandpaper tree), this protein is Maturase K.